The following is a 63-amino-acid chain: Large ribosomal subunit protein bL35 (63 aa).

The protein belongs to the bacterial ribosomal protein bL35 family.

The polypeptide is Large ribosomal subunit protein bL35 (Campylobacter jejuni subsp. jejuni serotype O:2 (strain ATCC 700819 / NCTC 11168)).